An 819-amino-acid polypeptide reads, in one-letter code: DNA mismatch repair protein MutS (819 aa).

596-603 (GPNMSGKS) contacts ATP.

The protein belongs to the DNA mismatch repair MutS family.

Its function is as follows. This protein is involved in the repair of mismatches in DNA. It is possible that it carries out the mismatch recognition step. This protein has a weak ATPase activity. The polypeptide is DNA mismatch repair protein MutS (Thermosipho melanesiensis (strain DSM 12029 / CIP 104789 / BI429)).